The chain runs to 72 residues: Exodeoxyribonuclease 7 small subunit (72 aa).

This sequence belongs to the XseB family. As to quaternary structure, heterooligomer composed of large and small subunits.

It localises to the cytoplasm. It catalyses the reaction Exonucleolytic cleavage in either 5'- to 3'- or 3'- to 5'-direction to yield nucleoside 5'-phosphates.. In terms of biological role, bidirectionally degrades single-stranded DNA into large acid-insoluble oligonucleotides, which are then degraded further into small acid-soluble oligonucleotides. This chain is Exodeoxyribonuclease 7 small subunit, found in Ruegeria pomeroyi (strain ATCC 700808 / DSM 15171 / DSS-3) (Silicibacter pomeroyi).